Here is a 261-residue protein sequence, read N- to C-terminus: (R)-S-adenosyl-L-methionine hydrolase (261 aa).

Positions 12, 72, and 187 each coordinate adenosine. (R)-S-adenosyl-L-methionine-binding residues include N187, S231, and V239. V239 lines the adenosine pocket.

The protein belongs to the SAM hydrolase / SAM-dependent halogenase family.

The catalysed reaction is (R)-S-adenosyl-L-methionine + H2O = adenosine + L-methionine + H(+). With respect to regulation, activity is inhibited by chloride. Catalyzes the hydrolysis of S-adenosyl-L-methionine (SAM) into adenosine and L-methionine. Is likely stereoselective, specifically hydrolyzing (R)-S-adenosyl-L-methionine ((R)-SAM), the inactive form of the ubiquitous cofactor SAM, and not the active form of SAM, (S)-S-adenosyl-L-methionine. Probaly plays a role in preventing accumulation of (R)-S-adenosyl-L-methionine in cells; maintenance of (S)-S-denosyl-L-methionine homochirality is important for cellular health given that the (R)-form is largely inactive as a methyl donor and can function as an inhibitor of methyltransferases. Shows very slow iodinase activity in vitro. This Salinispora arenicola (strain CNS-205) protein is (R)-S-adenosyl-L-methionine hydrolase.